Reading from the N-terminus, the 193-residue chain is Peptidyl-tRNA hydrolase (193 aa).

H17 provides a ligand contact to tRNA. H22 serves as the catalytic Proton acceptor. TRNA contacts are provided by F68, N70, and N116.

This sequence belongs to the PTH family. In terms of assembly, monomer.

It localises to the cytoplasm. It carries out the reaction an N-acyl-L-alpha-aminoacyl-tRNA + H2O = an N-acyl-L-amino acid + a tRNA + H(+). Hydrolyzes ribosome-free peptidyl-tRNAs (with 1 or more amino acids incorporated), which drop off the ribosome during protein synthesis, or as a result of ribosome stalling. Its function is as follows. Catalyzes the release of premature peptidyl moieties from peptidyl-tRNA molecules trapped in stalled 50S ribosomal subunits, and thus maintains levels of free tRNAs and 50S ribosomes. The chain is Peptidyl-tRNA hydrolase from Xanthomonas axonopodis pv. citri (strain 306).